Here is a 434-residue protein sequence, read N- to C-terminus: Trigger factor (434 aa).

The PPIase FKBP-type domain maps to 160–245; the sequence is GDKVKMNFVG…LTEVQAANLP (86 aa).

The protein belongs to the FKBP-type PPIase family. Tig subfamily.

It localises to the cytoplasm. The catalysed reaction is [protein]-peptidylproline (omega=180) = [protein]-peptidylproline (omega=0). In terms of biological role, involved in protein export. Acts as a chaperone by maintaining the newly synthesized protein in an open conformation. Functions as a peptidyl-prolyl cis-trans isomerase. This chain is Trigger factor, found in Shewanella putrefaciens (strain CN-32 / ATCC BAA-453).